A 257-amino-acid chain; its full sequence is Cytosolic Fe-S cluster assembly factor NUBP2 homolog (257 aa).

Residue 14–21 (GKGGVGKS) coordinates ATP. Cysteine 188 and cysteine 191 together coordinate [4Fe-4S] cluster.

Belongs to the Mrp/NBP35 ATP-binding proteins family. NUBP2/CFD1 subfamily. As to quaternary structure, heterotetramer of 2 NUBP1 and 2 NUBP2 chains. The cofactor is [4Fe-4S] cluster.

It localises to the cytoplasm. Its function is as follows. Component of the cytosolic iron-sulfur (Fe/S) protein assembly (CIA) machinery. Required for maturation of extramitochondrial Fe-S proteins. The NUBP1-NUBP2 heterotetramer forms a Fe-S scaffold complex, mediating the de novo assembly of an Fe-S cluster and its transfer to target apoproteins. This Culex quinquefasciatus (Southern house mosquito) protein is Cytosolic Fe-S cluster assembly factor NUBP2 homolog.